The sequence spans 380 residues: uncharacterized protein (380 aa).

This is an uncharacterized protein from Homo sapiens (Human).